A 424-amino-acid polypeptide reads, in one-letter code: Phosphoprotein associated with glycosphingolipid-enriched microdomains 1 (424 aa).

Topologically, residues M1 to M17 are extracellular. A helical; Signal-anchor for type III membrane protein transmembrane segment spans residues V18–L38. Residues C39 and C42 are each lipidated (S-palmitoyl cysteine). The Cytoplasmic segment spans residues C39–L424. Phosphoserine is present on residues S52 and S63. Position 107 is a phosphotyrosine; by LYN (Y107). Residue S157 is modified to Phosphoserine. Phosphotyrosine occurs at positions 165, 183, and 224. Positions D194–C347 are disordered. The span at A215–N230 shows a compositional bias: basic and acidic residues. Position 226 is a phosphoserine (S226). The span at S236–S247 shows a compositional bias: polar residues. Y314 carries the post-translational modification Phosphotyrosine; by FYN and LYN. An interaction with CSK region spans residues Y314–V317. Over residues S331–C347 the composition is skewed to polar residues. S346 carries the post-translational modification Phosphoserine. Phosphotyrosine occurs at positions 351, 381, and 409. The segment at P361–L424 is disordered. An interaction with NHERF1 region spans residues T422–L424.

Interacts with NHERF1/EBP50. In resting T-cells, part of a PAG1-NHERF1-MSN complex which is disrupted upon TCR activation. When phosphorylated, interacts with CSK. Identified in a complex with LYN and STAT3. Interacts with LYN. Palmitoylated. Post-translationally, phosphorylated by FYN on Tyr-314 in resting T-cells; which promotes interaction with CSK. Dephosphorylated by PTPRC/CD45 upon TCR activation; which leads to CSK dissociation. May also be dephosphorylated by PTPN11. Hyperphosphorylated in mast cells upon FCER1 activation. Phosphorylated by LYN in response to EPO. In terms of tissue distribution, ubiquitously expressed, with highest levels in developing brain, lung, thymus, spleen and testis. Present in mast cells.

The protein localises to the cell membrane. In terms of biological role, negatively regulates TCR (T-cell antigen receptor)-mediated signaling in T-cells and FCER1 (high affinity immunoglobulin epsilon receptor)-mediated signaling in mast cells. Promotes CSK activation and recruitment to lipid rafts, which results in LCK inhibition. Inhibits immunological synapse formation by preventing dynamic arrangement of lipid raft proteins. May be involved in cell adhesion signaling. This is Phosphoprotein associated with glycosphingolipid-enriched microdomains 1 (Pag1) from Rattus norvegicus (Rat).